We begin with the raw amino-acid sequence, 468 residues long: Phosphatidylglycerol--prolipoprotein diacylglyceryl transferase (468 aa).

The next 3 membrane-spanning stretches (helical) occupy residues 21-41 (LPVR…LLIG), 56-76 (YDIA…YHLA), and 96-116 (IWDG…GAWI). Position 144 (Arg144) interacts with a 1,2-diacyl-sn-glycero-3-phospho-(1'-sn-glycerol). 3 helical membrane passes run 192-212 (VVQP…VALI), 218-238 (FIIG…AGRF), and 256-276 (INSF…ILAP). Residues 349–468 (VVQVADRDGE…RWWRLRRRRQ (120 aa)) form a disordered region. A compositionally biased stretch (low complexity) spans 391–406 (AEAASAAPEEPAALAS). The segment covering 445–455 (DGIRRQDDFSS) has biased composition (basic and acidic residues). A compositionally biased stretch (basic residues) spans 456 to 468 (RRRRWWRLRRRRQ).

Belongs to the Lgt family.

The protein localises to the cell membrane. The enzyme catalyses L-cysteinyl-[prolipoprotein] + a 1,2-diacyl-sn-glycero-3-phospho-(1'-sn-glycerol) = an S-1,2-diacyl-sn-glyceryl-L-cysteinyl-[prolipoprotein] + sn-glycerol 1-phosphate + H(+). It participates in protein modification; lipoprotein biosynthesis (diacylglyceryl transfer). Its function is as follows. Catalyzes the transfer of the diacylglyceryl group from phosphatidylglycerol to the sulfhydryl group of the N-terminal cysteine of a prolipoprotein, the first step in the formation of mature lipoproteins. The sequence is that of Phosphatidylglycerol--prolipoprotein diacylglyceryl transferase from Mycobacterium bovis (strain ATCC BAA-935 / AF2122/97).